The primary structure comprises 387 residues: Delta(12)-acyl-lipid-desaturase (387 aa).

Residues 1–31 (MGAGGRMTVPNKWEGEGDEKSQKPVQRVPSA) form a disordered region. The segment covering 13 to 22 (WEGEGDEKSQ) has biased composition (basic and acidic residues). 2 helical membrane passes run 58–78 (SYVLYDLTLVAIFYYVATTYI) and 88–108 (AAWPVYWALQGCVLTGVWVIA). The Histidine box-1 motif lies at 109 to 113 (HECGH). A helical membrane pass occupies residues 121-141 (WVDDCVGLVLHSALLVPYFSW). The Histidine box-2 motif lies at 145 to 149 (HRRHH). 3 helical membrane passes run 183–203 (VMTLIVTLTLGWPLYLALNVS), 229–249 (IYISDVGIMAATYTLYKIAAA), and 251–271 (GLAWLVCVYGVPLLIVNAFLV). Residues 319–323 (HVAHH) carry the Histidine box-3 motif.

The protein belongs to the fatty acid desaturase type 1 family.

It localises to the membrane. It participates in lipid metabolism; polyunsaturated fatty acid biosynthesis. In terms of biological role, delta(12)-fatty acid desaturase producing in a heterologous system linoleic acid (18:2(9Z,12Z)) and to a lower extent hexadecadienoic acid (16:2(9Z,12Z)). The chain is Delta(12)-acyl-lipid-desaturase from Punica granatum (Pomegranate).